The chain runs to 148 residues: Transcriptional repressor NrdR (148 aa).

A zinc finger lies at 3-32 (CPKCSSEESKVVDSRQAEDAIRRRRVCESC). The 91-residue stretch at 47-137 (LLVIKKDDKR…VYRSFKDVSE (91 aa)) folds into the ATP-cone domain.

Belongs to the NrdR family. It depends on Zn(2+) as a cofactor.

Its function is as follows. Negatively regulates transcription of bacterial ribonucleotide reductase nrd genes and operons by binding to NrdR-boxes. The sequence is that of Transcriptional repressor NrdR from Lactococcus lactis subsp. lactis (strain IL1403) (Streptococcus lactis).